A 468-amino-acid chain; its full sequence is MKLPHELGPIHFIGIGGIGMSGIAEVLINLGYSVQGSDAAENANVLRLRRKGAIIHIGHRADNLGDAEVVVVSTAIKRNNPELAYARELRLPVVRRAEMLAELMRLKQCVAIAGTHGKTTTTSLVATLLEAGGFDPTVINGGIINAYGTNSRLGAGDWMVVEADESDGTFLKLPADVAIITNIDPEHLDHFGTFENIRKAFRSFVENIPFYGFAVMCLDHPTVQELVGQIEDRRVITYGENPHADVRLVDIDLAGGMSRFSVVVRDRKSGGETVIEKILMPMPGLHNALNATAAIAVAHQLGMSPDQIRGALAGFGGVKRRFTRTGEWNGAIVFDDYAHHPVEIAAVLKAARASTKGRVIAIVQPHRYTRLHSLFNEFAACFNDADAVIVADVYPAGEAPIEGADRDGLVAAIKARGHRLAMPLARPADLSRLVRQLARPGDYIVLLGAGNITQWAYALPGELAASAA.

114-120 is an ATP binding site; the sequence is GTHGKTT.

The protein belongs to the MurCDEF family.

The protein localises to the cytoplasm. It carries out the reaction UDP-N-acetyl-alpha-D-muramate + L-alanine + ATP = UDP-N-acetyl-alpha-D-muramoyl-L-alanine + ADP + phosphate + H(+). The protein operates within cell wall biogenesis; peptidoglycan biosynthesis. Cell wall formation. The sequence is that of UDP-N-acetylmuramate--L-alanine ligase from Methylocella silvestris (strain DSM 15510 / CIP 108128 / LMG 27833 / NCIMB 13906 / BL2).